The chain runs to 244 residues: rRNA adenine N-6-methyltransferase (244 aa).

S-adenosyl-L-methionine is bound by residues Asn-11, Ile-13, Gly-38, Glu-59, Asp-84, and Asn-101.

Belongs to the class I-like SAM-binding methyltransferase superfamily. rRNA adenine N(6)-methyltransferase family.

It catalyses the reaction adenosine(2085) in 23S rRNA + 2 S-adenosyl-L-methionine = N(6)-dimethyladenosine(2085) in 23S rRNA + 2 S-adenosyl-L-homocysteine + 2 H(+). This protein produces a dimethylation of the adenine residue at position 2085 in 23S rRNA, resulting in reduced affinity between ribosomes and macrolide-lincosamide-streptogramin B antibiotics. The chain is rRNA adenine N-6-methyltransferase (ermC) from Staphylococcus aureus.